The following is a 383-amino-acid chain: Hippurate hydrolase (383 aa).

This sequence belongs to the peptidase M20 family.

The catalysed reaction is N-benzoylglycine + H2O = benzoate + glycine. Its function is as follows. Cleaves hippuric acid into benzoic acid and glycine. The protein is Hippurate hydrolase of Campylobacter jejuni subsp. jejuni serotype O:2 (strain ATCC 700819 / NCTC 11168).